The primary structure comprises 560 residues: Formate--tetrahydrofolate ligase (560 aa).

69-76 (TPAGEGKS) is an ATP binding site.

This sequence belongs to the formate--tetrahydrofolate ligase family.

The enzyme catalyses (6S)-5,6,7,8-tetrahydrofolate + formate + ATP = (6R)-10-formyltetrahydrofolate + ADP + phosphate. Its pathway is one-carbon metabolism; tetrahydrofolate interconversion. In Listeria innocua serovar 6a (strain ATCC BAA-680 / CLIP 11262), this protein is Formate--tetrahydrofolate ligase.